Reading from the N-terminus, the 153-residue chain is Glucose-6-phosphate 1-dehydrogenase (153 aa).

NADP(+)-binding residues include Arg-21 and Lys-120. Residue Lys-120 coordinates D-glucose 6-phosphate.

The protein belongs to the glucose-6-phosphate dehydrogenase family.

The protein resides in the cytoplasm. It is found in the cytosol. It carries out the reaction D-glucose 6-phosphate + NADP(+) = 6-phospho-D-glucono-1,5-lactone + NADPH + H(+). Its pathway is carbohydrate degradation; pentose phosphate pathway; D-ribulose 5-phosphate from D-glucose 6-phosphate (oxidative stage): step 1/3. In terms of biological role, cytosolic glucose-6-phosphate dehydrogenase that catalyzes the first and rate-limiting step of the oxidative branch within the pentose phosphate pathway/shunt, an alternative route to glycolysis for the dissimilation of carbohydrates and a major source of reducing power and metabolic intermediates for fatty acid and nucleic acid biosynthetic processes. The sequence is that of Glucose-6-phosphate 1-dehydrogenase (Zw) from Drosophila simulans (Fruit fly).